Consider the following 79-residue polypeptide: Conotoxin Tr6.3 (79 aa).

Residues M1–A22 form the signal peptide. The propeptide occupies V23–R47. 3 disulfide bridges follow: C49–C62, C56–C67, and C61–C77. P60 and P63 each carry 4-hydroxyproline.

The protein belongs to the conotoxin O1 superfamily. As to expression, expressed by the venom duct.

The protein localises to the secreted. Ion channel inhibitor that inhibits the increase in intracellular calcium upon depolarization in DRG neurons. In vivo, both intraperitoneal and intracranial injections into mice induce hyperactivity. This Conus terebra (Sea snail) protein is Conotoxin Tr6.3.